The chain runs to 601 residues: Mitochondrial tRNA methylthiotransferase CDK5RAP1 (601 aa).

The N-terminal 33 residues, 1–33 (MHPLQCVLQVQRSLGWGPLASVSWLSLRMCRAH), are a transit peptide targeting the mitochondrion. The region spanning 100–220 (RKVYLETYGC…LPRLLAVAES (121 aa)) is the MTTase N-terminal domain. [4Fe-4S] cluster-binding residues include Cys109, Cys145, Cys183, Cys258, Cys262, and Cys265. The Radical SAM core domain occupies 244–512 (SASATSAFVS…ITIFREEATK (269 aa)). The region spanning 515 to 590 (QTSVGCTQLV…SQTLRGHVLC (76 aa)) is the TRAM domain.

This sequence belongs to the methylthiotransferase family. MiaB subfamily. In terms of assembly, interacts with CDK5R1 (p35 form). CDK5RAP1, CDK5RAP2 and CDK5RAP3 show competitive binding to CDK5R1. Forms a complex with CDK5R1 and CDK5. [4Fe-4S] cluster serves as cofactor. In terms of tissue distribution, expressed in heart, brain, placenta, lung, liver, skeletal muscle, kidney and pancreas. Expressed in neurons of central nervous tissue. As to expression, mainly expressed in brain, placenta and testis. High expression in placenta and lung.

It is found in the mitochondrion. It carries out the reaction N(6)-dimethylallyladenosine(37) in tRNA + (sulfur carrier)-SH + AH2 + 2 S-adenosyl-L-methionine = 2-methylsulfanyl-N(6)-dimethylallyladenosine(37) in tRNA + (sulfur carrier)-H + 5'-deoxyadenosine + L-methionine + A + S-adenosyl-L-homocysteine + 2 H(+). In terms of biological role, methylthiotransferase that catalyzes the conversion of N6-(dimethylallyl)adenosine (i(6)A) to 2-methylthio-N6-(dimethylallyl)adenosine (ms(2)i(6)A) at position 37 (adjacent to the 3'-end of the anticodon) of four mitochondrial DNA-encoded tRNAs (Ser(UCN), Phe, Tyr and Trp). Essential for efficient and highly accurate protein translation by the ribosome. Specifically inhibits CDK5 activation by CDK5R1. Essential for efficient mitochondrial protein synthesis and respiratory chain; shows pathological consequences in mitochondrial disease. The chain is Mitochondrial tRNA methylthiotransferase CDK5RAP1 from Homo sapiens (Human).